Reading from the N-terminus, the 245-residue chain is MSGGVIRGPAGNNDCRIYVGNLPPDIRTKDVEDVFYKYGAIRDIDLKNRRGGPPFAFVEFEDPRDAEDAVYGRDGYDYDGYRLRVEFPRSGRGGGRGGGGGGGVGAPRGRYGPPSRRSEYRVIVSGLPPSGSWQDLKDHMREAGDVCYADVFRDGTGVVEFVRKEDMTYAVRKLDNTKFRSHEGETAYIRVKVDGPRSPSYGRSRSRSRSRSRSRSNSRSRSYSPRRSRGSPRYSPRHSRSRSRT.

The 76-residue stretch at 15 to 90 (CRIYVGNLPP…YRLRVEFPRS (76 aa)) folds into the RRM 1 domain. 2 disordered regions span residues 89 to 116 (RSGRGGGRGGGGGGGVGAPRGRYGPPSR) and 192 to 245 (KVDG…RSRT). The segment covering 91-106 (GRGGGRGGGGGGGVGA) has biased composition (gly residues). The RRM 2 domain maps to 120-194 (YRVIVSGLPP…ETAYIRVKVD (75 aa)). Residues 204–245 (SRSRSRSRSRSRSNSRSRSYSPRRSRGSPRYSPRHSRSRSRT) show a composition bias toward basic residues.

This sequence belongs to the splicing factor SR family.

The protein localises to the cytoplasm. It is found in the nucleus speckle. In terms of biological role, may play a role in preventing exon skipping, ensuring the accuracy of splicing and regulating alternative splicing. The chain is Serine/arginine-rich splicing factor 1B (srsf1b) from Danio rerio (Zebrafish).